We begin with the raw amino-acid sequence, 71 residues long: Protein CYSTEINE-RICH TRANSMEMBRANE MODULE 8 (71 aa).

The span at 1–22 shows a compositional bias: polar residues; the sequence is MNQSAQNYFSVQKPSETSSGPY. The interval 1–35 is disordered; sequence MNQSAQNYFSVQKPSETSSGPYTSPPPIGYPTRDA. The helical transmembrane segment at 48-64 threads the bilayer; the sequence is NSKGVNPEGCCAAICCC.

It belongs to the CYSTM1 family. Mostly expressed in stems, siliques, roots and flowers and, to a lower extent, in leaves.

It is found in the membrane. Its subcellular location is the nucleus. Functionally, involved in resistance to abiotic stress. The sequence is that of Protein CYSTEINE-RICH TRANSMEMBRANE MODULE 8 from Arabidopsis thaliana (Mouse-ear cress).